Reading from the N-terminus, the 282-residue chain is Pantothenate synthetase (282 aa).

30–37 (MGYLHEGH) provides a ligand contact to ATP. H37 (proton donor) is an active-site residue. Residue Q61 participates in (R)-pantoate binding. Q61 is a binding site for beta-alanine. An ATP-binding site is contributed by 147–150 (GMKD). Q153 contributes to the (R)-pantoate binding site. ATP is bound by residues V176 and 184 to 187 (KSSR).

It belongs to the pantothenate synthetase family. Homodimer.

The protein resides in the cytoplasm. It catalyses the reaction (R)-pantoate + beta-alanine + ATP = (R)-pantothenate + AMP + diphosphate + H(+). It participates in cofactor biosynthesis; (R)-pantothenate biosynthesis; (R)-pantothenate from (R)-pantoate and beta-alanine: step 1/1. Catalyzes the condensation of pantoate with beta-alanine in an ATP-dependent reaction via a pantoyl-adenylate intermediate. This Geobacillus sp. (strain WCH70) protein is Pantothenate synthetase.